The following is a 345-amino-acid chain: Phosphoribosylformylglycinamidine cyclo-ligase (345 aa).

The protein belongs to the AIR synthase family.

It localises to the cytoplasm. The catalysed reaction is 2-formamido-N(1)-(5-O-phospho-beta-D-ribosyl)acetamidine + ATP = 5-amino-1-(5-phospho-beta-D-ribosyl)imidazole + ADP + phosphate + H(+). The protein operates within purine metabolism; IMP biosynthesis via de novo pathway; 5-amino-1-(5-phospho-D-ribosyl)imidazole from N(2)-formyl-N(1)-(5-phospho-D-ribosyl)glycinamide: step 2/2. In Actinobacillus pleuropneumoniae serotype 5b (strain L20), this protein is Phosphoribosylformylglycinamidine cyclo-ligase.